A 356-amino-acid polypeptide reads, in one-letter code: UDP-N-acetylglucosamine--N-acetylmuramyl-(pentapeptide) pyrophosphoryl-undecaprenol N-acetylglucosamine transferase (356 aa).

UDP-N-acetyl-alpha-D-glucosamine is bound by residues 12–14, Asn124, Arg163, Ser188, Ile242, 261–266, and Gln287; these read TGG and ALTVSE.

It belongs to the glycosyltransferase 28 family. MurG subfamily.

Its subcellular location is the cell inner membrane. The catalysed reaction is di-trans,octa-cis-undecaprenyl diphospho-N-acetyl-alpha-D-muramoyl-L-alanyl-D-glutamyl-meso-2,6-diaminopimeloyl-D-alanyl-D-alanine + UDP-N-acetyl-alpha-D-glucosamine = di-trans,octa-cis-undecaprenyl diphospho-[N-acetyl-alpha-D-glucosaminyl-(1-&gt;4)]-N-acetyl-alpha-D-muramoyl-L-alanyl-D-glutamyl-meso-2,6-diaminopimeloyl-D-alanyl-D-alanine + UDP + H(+). It functions in the pathway cell wall biogenesis; peptidoglycan biosynthesis. Functionally, cell wall formation. Catalyzes the transfer of a GlcNAc subunit on undecaprenyl-pyrophosphoryl-MurNAc-pentapeptide (lipid intermediate I) to form undecaprenyl-pyrophosphoryl-MurNAc-(pentapeptide)GlcNAc (lipid intermediate II). The protein is UDP-N-acetylglucosamine--N-acetylmuramyl-(pentapeptide) pyrophosphoryl-undecaprenol N-acetylglucosamine transferase of Pseudomonas fluorescens (strain ATCC BAA-477 / NRRL B-23932 / Pf-5).